The following is a 1006-amino-acid chain: Pentatricopeptide repeat-containing protein At1g30610, chloroplastic (1006 aa).

A chloroplast-targeting transit peptide spans 1-40 (MAVTISTNAFVNASLLDESRNSFWRPLFHQPYYNCRRVVR). Disordered regions lie at residues 180–219 (LSKS…ERGS) and 248–292 (SSVA…IARG). Residues 194 to 219 (ESFRKRYSKQEYHRSSDTSRGIERGS) are compositionally biased toward basic and acidic residues. Residues 254–263 (WSNSGESSVT) are compositionally biased toward polar residues. Basic and acidic residues predominate over residues 265–284 (PKDESFRRRYSKQEHHRSSD). 10 PPR repeats span residues 468–502 (TDYT…DRYK), 506–536 (IRII…MLLQ), 542–572 (DMVA…MRSP), 592–626 (DVVV…GQKP), 627–657 (SPVT…MQKS), 661–695 (NALA…GIVG), 759–789 (LVVT…MKKV), 793–827 (NLVT…GNHI), 840–874 (DTYT…GYHF), and 875–909 (NAKR…NRIP).

This sequence belongs to the PPR family. P subfamily.

It is found in the plastid. It localises to the chloroplast. Functionally, may play a role in embryogenesis. The chain is Pentatricopeptide repeat-containing protein At1g30610, chloroplastic (EMB2279) from Arabidopsis thaliana (Mouse-ear cress).